A 325-amino-acid chain; its full sequence is 5-dehydro-2-deoxygluconokinase (325 aa).

The protein belongs to the carbohydrate kinase PfkB family.

It carries out the reaction 5-dehydro-2-deoxy-D-gluconate + ATP = 6-phospho-5-dehydro-2-deoxy-D-gluconate + ADP + H(+). Its pathway is polyol metabolism; myo-inositol degradation into acetyl-CoA; acetyl-CoA from myo-inositol: step 5/7. Catalyzes the phosphorylation of 5-dehydro-2-deoxy-D-gluconate (2-deoxy-5-keto-D-gluconate or DKG) to 6-phospho-5-dehydro-2-deoxy-D-gluconate (DKGP). In Bacillus licheniformis (strain ATCC 14580 / DSM 13 / JCM 2505 / CCUG 7422 / NBRC 12200 / NCIMB 9375 / NCTC 10341 / NRRL NRS-1264 / Gibson 46), this protein is 5-dehydro-2-deoxygluconokinase.